Reading from the N-terminus, the 419-residue chain is Acyl-[acyl-carrier-protein] hydrolase FATB1, chloroplastic (419 aa).

A chloroplast-targeting transit peptide spans 1–50 (MVAAAATSAFFPVPAPGTSPKPGKSGNWPSSLSPTFKPKSIPNGGFQVKA). Positions 1–84 (MVAAAATSAF…DTSSSPPPRA (84 aa)) are disordered. Positions 61–78 (SAVNLKSGSLNTQEDTSS) are enriched in polar residues. Catalysis depends on residues asparagine 315, histidine 317, and cysteine 352. The interval 390 to 419 (SRTEWRPKNAGTNGAISTSTAKTSNGNSVS) is disordered. The span at 399 to 419 (AGTNGAISTSTAKTSNGNSVS) shows a compositional bias: polar residues.

It belongs to the acyl-ACP thioesterase family.

It is found in the plastid. The protein localises to the chloroplast. The enzyme catalyses octanoyl-[ACP] + H2O = octanoate + holo-[ACP] + H(+). It carries out the reaction decanoyl-[ACP] + H2O = decanoate + holo-[ACP] + H(+). Functionally, plays an essential role in chain termination during de novo fatty acid synthesis. Possesses thioesterase activity for short chain acyl-ACPs. Substrate preference is 8:0 &gt; 10:0. This is Acyl-[acyl-carrier-protein] hydrolase FATB1, chloroplastic from Cuphea viscosissima (Blue waxweed).